We begin with the raw amino-acid sequence, 260 residues long: ELL-associated factor 2 (260 aa).

The necessary for interaction with ELL stretch occupies residues 17–104; it reads LKLGESFEKQ…TGECRLEKLS (88 aa). The span at 116–126 shows a compositional bias: basic and acidic residues; sequence GSSKIQYRKEQ. Disordered regions lie at residues 116-154 and 170-234; these read GSSK…SPAS and MDQM…HNRF. Ser-146, Ser-151, and Ser-154 each carry phosphoserine. Low complexity predominate over residues 174–192; the sequence is SSCDSSSDSKSSSSSSSED. A necessary for transactivation activity region spans residues 177–260; sequence DSSSDSKSSS…LSESGSDSDD (84 aa). The span at 225–234 shows a compositional bias: basic and acidic residues; that stretch reads PDIDASHNRF. A necessary for interaction with TCEA1 and transactivation activity region spans residues 246–260; that stretch reads RNDLQLSESGSDSDD.

This sequence belongs to the EAF family. Isoform 1 and isoform 2 interact with TCEA1. Component of the super elongation complex (SEC), at least composed of EAF1, EAF2, CDK9, MLLT3/AF9, AFF (AFF1 or AFF4), the P-TEFb complex and ELL (ELL, ELL2 or ELL3). Interacts with ELL and ELL2. As to expression, expressed in heart, brain, placenta, lung, skeletal muscle, kidney, pancreas, spleen, prostate, testis, small intestine, colon, adrenal, bone marrow, lymph node, spinal gland, stomach, thyroid, trachea, thymus, liver and leukocytes.

The protein resides in the nucleus speckle. Functionally, acts as a transcriptional transactivator of TCEA1 elongation activity. Acts as a transcriptional transactivator of ELL and ELL2 elongation activities. Potent inducer of apoptosis in prostatic and non-prostatic cell lines. Inhibits prostate tumor growth in vivo. The chain is ELL-associated factor 2 (EAF2) from Homo sapiens (Human).